A 121-amino-acid chain; its full sequence is Putative iron-sulfur cluster insertion protein ErpA (121 aa).

Cys-49, Cys-113, and Cys-115 together coordinate iron-sulfur cluster.

It belongs to the HesB/IscA family. Homodimer. The cofactor is iron-sulfur cluster.

Required for insertion of 4Fe-4S clusters. The protein is Putative iron-sulfur cluster insertion protein ErpA of Nitrosomonas eutropha (strain DSM 101675 / C91 / Nm57).